A 182-amino-acid polypeptide reads, in one-letter code: MSTSSSSSWDNLLESLSLSTVWNWIQASFLGETSAPQQTSLGLLDNLAPAVQIILRISFLILLGIGIYALWKRSIQSIQKTLLFVITLYKLYKKGSHIFEALLANPEGSGLRIQDNNNLFLSLGLQEKILKKLKTVENKMKNLEGIIVAQKPATKRDCSSEPYCSCSDCQSPLSTSGFTSPI.

A helical membrane pass occupies residues 51–71 (VQIILRISFLILLGIGIYALW). Residues 124 to 151 (GLQEKILKKLKTVENKMKNLEGIIVAQK) are a coiled coil.

The protein localises to the membrane. The protein is Transmembrane and coiled-coil domain-containing protein 2 (TMCO2) of Homo sapiens (Human).